The following is a 98-amino-acid chain: YcgL domain-containing protein Ping_1076 (98 aa).

The YcgL domain occupies 1-85 (MLCAVYKSIR…PPVNHLQEHK (85 aa)). Positions 75-98 (PPPVNHLQEHKDWKKKRQENKNEI) are disordered.

This is YcgL domain-containing protein Ping_1076 from Psychromonas ingrahamii (strain DSM 17664 / CCUG 51855 / 37).